Here is a 356-residue protein sequence, read N- to C-terminus: Transcription factor ATOH1 (356 aa).

Over residues 1-21 the composition is skewed to basic and acidic residues; the sequence is MSRLLHAEEWAEVKELGDHHR. Disordered stretches follow at residues 1–56 and 92–125; these read MSRL…PELS and SEAA…GPVK. Pro residues predominate over residues 26-40; it reads HHLPQPPPPPPPQPP. Residues 96–109 are compositionally biased toward basic and acidic residues; it reads APRDEVDGRGELVR. Low complexity predominate over residues 110–124; sequence RSSGGASSSKSPGPV. A bHLH domain is found at 161–213; it reads QRRLAANARERRRMHGLNHAFDQLRNVIPSFNNDKKLSKYETLQMAQIYINAL. 2 disordered regions span residues 218-279 and 314-356; these read QTPS…TRFS and SPSL…DEAS. Positions 252–266 are enriched in low complexity; that stretch reads NATAAGAQQASGGSQ. The span at 337–356 shows a compositional bias: basic and acidic residues; it reads HRSDGEFSPHSHYSDSDEAS.

As to quaternary structure, efficient DNA binding requires dimerization with another bHLH protein.

The protein resides in the nucleus. Transcriptional regulator. Activates E box-dependent transcription in collaboration with TCF3/E47, but the activity is completely antagonized by the negative regulator of neurogenesis HES1. Plays a role in the differentiation of subsets of neural cells by activating E box-dependent transcription. In Pan troglodytes (Chimpanzee), this protein is Transcription factor ATOH1.